A 543-amino-acid polypeptide reads, in one-letter code: CTP synthase (543 aa).

The tract at residues 1-265 is amidoligase domain; sequence MTKFIFVTGG…DRLVTDRFRI (265 aa). Serine 13 provides a ligand contact to CTP. Serine 13 is a UTP binding site. ATP is bound by residues 14–19 and aspartate 71; that span reads SLGKGI. Mg(2+)-binding residues include aspartate 71 and glutamate 139. CTP contacts are provided by residues 146–148, 186–191, and lysine 222; these read DIE and KTKPTQ. UTP contacts are provided by residues 186 to 191 and lysine 222; that span reads KTKPTQ. One can recognise a Glutamine amidotransferase type-1 domain in the interval 290–541; sequence EIAMVGKYVD…VEAASQHKQT (252 aa). Glycine 351 contacts L-glutamine. Catalysis depends on cysteine 378, which acts as the Nucleophile; for glutamine hydrolysis. Residues 379–382, glutamate 402, and arginine 469 each bind L-glutamine; that span reads LGMQ. Catalysis depends on residues histidine 514 and glutamate 516.

Belongs to the CTP synthase family. As to quaternary structure, homotetramer.

The catalysed reaction is UTP + L-glutamine + ATP + H2O = CTP + L-glutamate + ADP + phosphate + 2 H(+). It catalyses the reaction L-glutamine + H2O = L-glutamate + NH4(+). The enzyme catalyses UTP + NH4(+) + ATP = CTP + ADP + phosphate + 2 H(+). Its pathway is pyrimidine metabolism; CTP biosynthesis via de novo pathway; CTP from UDP: step 2/2. Its activity is regulated as follows. Allosterically activated by GTP, when glutamine is the substrate; GTP has no effect on the reaction when ammonia is the substrate. The allosteric effector GTP functions by stabilizing the protein conformation that binds the tetrahedral intermediate(s) formed during glutamine hydrolysis. Inhibited by the product CTP, via allosteric rather than competitive inhibition. Functionally, catalyzes the ATP-dependent amination of UTP to CTP with either L-glutamine or ammonia as the source of nitrogen. Regulates intracellular CTP levels through interactions with the four ribonucleotide triphosphates. This chain is CTP synthase, found in Hydrogenovibrio crunogenus (strain DSM 25203 / XCL-2) (Thiomicrospira crunogena).